Here is an 84-residue protein sequence, read N- to C-terminus: Putative defensin-like protein 165 (84 aa).

Residues 1 to 27 (MSTKLFSYFMLLVVLFSVLTIIPKTEA) form the signal peptide. 4 cysteine pairs are disulfide-bonded: Cys-31–Cys-78, Cys-41–Cys-60, Cys-46–Cys-72, and Cys-50–Cys-74.

Belongs to the DEFL family.

It localises to the secreted. This chain is Putative defensin-like protein 165 (LCR12), found in Arabidopsis thaliana (Mouse-ear cress).